The chain runs to 856 residues: Envelope glycoprotein GP350 (856 aa).

Residues 1–809 (MEAALLVCQY…TSQPRFSNLS (809 aa)) are Virion surface-facing. N-linked (GlcNAc...) asparagine; by host glycosylation is found at asparagine 47, asparagine 87, asparagine 114, asparagine 166, asparagine 169, asparagine 195, asparagine 229, asparagine 277, asparagine 318, asparagine 328, asparagine 345, asparagine 356, asparagine 378, asparagine 386, asparagine 411, asparagine 435, asparagine 443, asparagine 457, asparagine 497, asparagine 519, asparagine 533, asparagine 554, asparagine 568, asparagine 582, asparagine 585, asparagine 603, and asparagine 614. Positions 421-779 (FSKAPESTTT…PPSTSSELRP (359 aa)) are disordered. The span at 427-437 (STTTSPTSNTT) shows a compositional bias: low complexity. A compositionally biased stretch (polar residues) spans 442-488 (PNTTTGLPSSTHVPTNLTAPASTGPTVSTADVTSPTPAGTTSGASPV). The span at 507–570 (TSPTPAVTTP…AVTTPTPNAT (64 aa)) shows a compositional bias: low complexity. Positions 575 to 616 (GETSPQANTTNHTLGGTSSTPVVTSQPKNATSAVTTGQHNIT) are enriched in polar residues. Residues 617-631 (SSSTSSMSLRPSSIS) are compositionally biased toward low complexity. N-linked (GlcNAc...) asparagine; by host glycosylation occurs at asparagine 650. Low complexity predominate over residues 654–669 (VTPASTSTHHVSTSSP). The span at 674-690 (GTTSQASGPGNSSTSTK) shows a compositional bias: polar residues. 4 N-linked (GlcNAc...) asparagine; by host glycosylation sites follow: asparagine 684, asparagine 695, asparagine 704, and asparagine 729. Over residues 703–730 (KNATSPQAPSGQKTAVPTVTSTGGKANS) the composition is skewed to polar residues. The span at 731-741 (TTGGKHTTGHG) shows a compositional bias: low complexity. The span at 743–776 (RTSTEPTTDYGGDSTTPRTRYNATTYLPPSTSSE) shows a compositional bias: polar residues. N-linked (GlcNAc...) asparagine; by host glycans are attached at residues asparagine 764 and asparagine 807. A helical transmembrane segment spans residues 810–830 (MLVLQWASLAVLTLLLLLVMA). At 831–856 (DCAFRRNLSTSHTYTTPPYDDAETYV) the chain is on the intravirion side.

Belongs to the Epstein-Barr GP350 family. As to quaternary structure, interacts with host CR2. Post-translationally, extensively glycosylated.

Its subcellular location is the virion membrane. It localises to the host membrane. In terms of biological role, initiates virion attachment to host B-lymphocyte cell, leading to virus entry. Acts by binding to host CR2 at the surface of B-lymphocytes, facilitating the binding of viral glycoprotein gp42 to HLA class II molecules. Attachment triggers virion-host membrane fusion and invasion of the host cell. The protein is Envelope glycoprotein GP350 of Homo sapiens (Human).